The primary structure comprises 432 residues: Pachytene checkpoint protein 2 homolog (432 aa).

Position 1 is an N-acetylmethionine (M1). Residue 179–186 (GPPGTGKT) coordinates ATP.

It belongs to the AAA ATPase family. PCH2 subfamily. Specifically interacts with the ligand binding domain of the thyroid receptor (TR). This interaction does not require the presence of thyroid hormone for its interaction. Interacts with proteasome subunit PSMA8; to participate in meiosis progression during spermatogenesis. Widely expressed, including in testis.

Plays a key role in chromosome recombination and chromosome structure development during meiosis. Required at early steps in meiotic recombination that leads to non-crossovers pathways. Also needed for efficient completion of homologous synapsis by influencing crossover distribution along the chromosomes affecting both crossovers and non-crossovers pathways. Also required for development of higher-order chromosome structures and is needed for synaptonemal-complex formation. In males, required for efficient synapsis of the sex chromosomes and for sex body formation. Promotes early steps of the DNA double-strand breaks (DSBs) repair process upstream of the assembly of RAD51 complexes. Required for depletion of HORMAD1 and HORMAD2 from synapsed chromosomes. Plays a role in mitotic spindle assembly checkpoint (SAC) activation. The sequence is that of Pachytene checkpoint protein 2 homolog (Trip13) from Mus musculus (Mouse).